The chain runs to 178 residues: Cytochrome b6-f complex iron-sulfur subunit (178 aa).

The chain crosses the membrane as a helical span at residues 20-42 (LLTFGTATGVALGALYPVANYFM). Positions 65–161 (KTGWLASHQA…VDVDDDAVLV (97 aa)) constitute a Rieske domain. [2Fe-2S] cluster contacts are provided by Cys-107, His-109, Cys-125, and His-128. Cysteines 112 and 127 form a disulfide.

This sequence belongs to the Rieske iron-sulfur protein family. In terms of assembly, the 4 large subunits of the cytochrome b6-f complex are cytochrome b6, subunit IV (17 kDa polypeptide, PetD), cytochrome f and the Rieske protein, while the 4 small subunits are PetG, PetL, PetM and PetN. The complex functions as a dimer. The cofactor is [2Fe-2S] cluster.

The protein localises to the cellular thylakoid membrane. It catalyses the reaction 2 oxidized [plastocyanin] + a plastoquinol + 2 H(+)(in) = 2 reduced [plastocyanin] + a plastoquinone + 4 H(+)(out). Functionally, component of the cytochrome b6-f complex, which mediates electron transfer between photosystem II (PSII) and photosystem I (PSI), cyclic electron flow around PSI, and state transitions. The sequence is that of Cytochrome b6-f complex iron-sulfur subunit from Prochlorococcus marinus subsp. pastoris (strain CCMP1986 / NIES-2087 / MED4).